Consider the following 298-residue polypeptide: MSITFQSIIAKLHEFWSARGCLIAQPYDTEKGAGTMSPHTFLRAIGPEPWSVAYVEPCRRPTDGRYGENPNRFQHYYQYQVLIKPSPDNIQEIYLDSLRSLGIHPEDHDIRFVEDNWESPTLGAWGVGWEVWLDGMEITQFTYFQQCGGIDCRPVSIEITYGLERLAMYLQNVDAITKIQWNDQVNYGEIFLQNEIEQSTYNFEASTPDLLFNLFSLYEQEAKQLIERGLVIPSLDYVLKCSHSFNLLDARGVIAVAERTRYIGRIRNLAREVAQLYLQQRENLGFPLEPVQAALING.

It belongs to the class-II aminoacyl-tRNA synthetase family. Tetramer of two alpha and two beta subunits.

Its subcellular location is the cytoplasm. It carries out the reaction tRNA(Gly) + glycine + ATP = glycyl-tRNA(Gly) + AMP + diphosphate. This chain is Glycine--tRNA ligase alpha subunit, found in Gloeothece citriformis (strain PCC 7424) (Cyanothece sp. (strain PCC 7424)).